The chain runs to 411 residues: Translation initiation factor 2 subunit gamma (411 aa).

Positions 9-201 constitute a tr-type G domain; the sequence is QPTVNIGMVG…AIEKYIPTPE (193 aa). Positions 18–25 are G1; that stretch reads GHVDHGKS. The Mg(2+) site is built by Asp-21, Ser-25, Gly-46, and Ser-48. 21–26 lines the GTP pocket; that stretch reads DHGKST. Residues 46 to 50 form a G2 region; sequence GISIK. Positions 88-91 are G3; that stretch reads DAPG. GTP is bound by residues 144–147 and 179–181; these read NKID and SAY. A G4 region spans residues 144 to 147; it reads NKID. The G5 stretch occupies residues 179–181; sequence SAY.

The protein belongs to the TRAFAC class translation factor GTPase superfamily. Classic translation factor GTPase family. EIF2G subfamily. As to quaternary structure, heterotrimer composed of an alpha, a beta and a gamma chain. Mg(2+) is required as a cofactor.

It catalyses the reaction GTP + H2O = GDP + phosphate + H(+). In terms of biological role, eIF-2 functions in the early steps of protein synthesis by forming a ternary complex with GTP and initiator tRNA. The polypeptide is Translation initiation factor 2 subunit gamma (Thermoplasma volcanium (strain ATCC 51530 / DSM 4299 / JCM 9571 / NBRC 15438 / GSS1)).